Consider the following 424-residue polypeptide: Serine hydroxymethyltransferase 2 (424 aa).

(6S)-5,6,7,8-tetrahydrofolate-binding positions include L125 and 129–131 (GHL). Position 234 is an N6-(pyridoxal phosphate)lysine (K234). (6S)-5,6,7,8-tetrahydrofolate is bound at residue E250.

Belongs to the SHMT family. As to quaternary structure, homodimer. The cofactor is pyridoxal 5'-phosphate.

Its subcellular location is the cytoplasm. It catalyses the reaction (6R)-5,10-methylene-5,6,7,8-tetrahydrofolate + glycine + H2O = (6S)-5,6,7,8-tetrahydrofolate + L-serine. It functions in the pathway one-carbon metabolism; tetrahydrofolate interconversion. The protein operates within amino-acid biosynthesis; glycine biosynthesis; glycine from L-serine: step 1/1. Functionally, catalyzes the reversible interconversion of serine and glycine with tetrahydrofolate (THF) serving as the one-carbon carrier. This reaction serves as the major source of one-carbon groups required for the biosynthesis of purines, thymidylate, methionine, and other important biomolecules. Also exhibits THF-independent aldolase activity toward beta-hydroxyamino acids, producing glycine and aldehydes, via a retro-aldol mechanism. The chain is Serine hydroxymethyltransferase 2 from Burkholderia mallei (strain ATCC 23344).